A 190-amino-acid chain; its full sequence is Xanthine phosphoribosyltransferase (190 aa).

Xanthine-binding residues include L20 and N27. 128–132 (ANGKA) provides a ligand contact to 5-phospho-alpha-D-ribose 1-diphosphate. A xanthine-binding site is contributed by K156.

Belongs to the purine/pyrimidine phosphoribosyltransferase family. Xpt subfamily. Homodimer.

The protein resides in the cytoplasm. The catalysed reaction is XMP + diphosphate = xanthine + 5-phospho-alpha-D-ribose 1-diphosphate. The protein operates within purine metabolism; XMP biosynthesis via salvage pathway; XMP from xanthine: step 1/1. Functionally, converts the preformed base xanthine, a product of nucleic acid breakdown, to xanthosine 5'-monophosphate (XMP), so it can be reused for RNA or DNA synthesis. The protein is Xanthine phosphoribosyltransferase of Ruminiclostridium cellulolyticum (strain ATCC 35319 / DSM 5812 / JCM 6584 / H10) (Clostridium cellulolyticum).